The following is a 636-amino-acid chain: DNA gyrase subunit B (636 aa).

The 115-residue stretch at 421-535 (TELFIVEGDS…QGRVYIALPP (115 aa)) folds into the Toprim domain. Mg(2+)-binding residues include Glu427, Asp500, and Asp502.

This sequence belongs to the type II topoisomerase GyrB family. As to quaternary structure, heterotetramer, composed of two GyrA and two GyrB chains. In the heterotetramer, GyrA contains the active site tyrosine that forms a transient covalent intermediate with DNA, while GyrB binds cofactors and catalyzes ATP hydrolysis. Mg(2+) is required as a cofactor. The cofactor is Mn(2+). Requires Ca(2+) as cofactor.

Its subcellular location is the cytoplasm. It carries out the reaction ATP-dependent breakage, passage and rejoining of double-stranded DNA.. In terms of biological role, a type II topoisomerase that negatively supercoils closed circular double-stranded (ds) DNA in an ATP-dependent manner to modulate DNA topology and maintain chromosomes in an underwound state. Negative supercoiling favors strand separation, and DNA replication, transcription, recombination and repair, all of which involve strand separation. Also able to catalyze the interconversion of other topological isomers of dsDNA rings, including catenanes and knotted rings. Type II topoisomerases break and join 2 DNA strands simultaneously in an ATP-dependent manner. The polypeptide is DNA gyrase subunit B (Thermotoga maritima (strain ATCC 43589 / DSM 3109 / JCM 10099 / NBRC 100826 / MSB8)).